We begin with the raw amino-acid sequence, 94 residues long: Co-chaperonin GroES (94 aa).

This sequence belongs to the GroES chaperonin family. Heptamer of 7 subunits arranged in a ring. Interacts with the chaperonin GroEL.

Its subcellular location is the cytoplasm. In terms of biological role, together with the chaperonin GroEL, plays an essential role in assisting protein folding. The GroEL-GroES system forms a nano-cage that allows encapsulation of the non-native substrate proteins and provides a physical environment optimized to promote and accelerate protein folding. GroES binds to the apical surface of the GroEL ring, thereby capping the opening of the GroEL channel. The protein is Co-chaperonin GroES of Ehrlichia chaffeensis.